A 254-amino-acid polypeptide reads, in one-letter code: Isoprenyl transferase (254 aa).

The active site involves Asp23. Asp23 lines the Mg(2+) pocket. Substrate is bound by residues 24–27, Trp28, Arg36, His40, and 68–70; these read GNGR and STE. Asn71 functions as the Proton acceptor in the catalytic mechanism. Residues Trp72, Arg74, Arg191, and 197 to 199 contribute to the substrate site; that span reads RIS. Position 210 (Glu210) interacts with Mg(2+).

Belongs to the UPP synthase family. As to quaternary structure, homodimer. It depends on Mg(2+) as a cofactor.

Functionally, catalyzes the condensation of isopentenyl diphosphate (IPP) with allylic pyrophosphates generating different type of terpenoids. This Porphyromonas gingivalis (strain ATCC BAA-308 / W83) protein is Isoprenyl transferase.